We begin with the raw amino-acid sequence, 338 residues long: Histidinol-phosphate aminotransferase (338 aa).

Lys204 carries the N6-(pyridoxal phosphate)lysine modification.

Belongs to the class-II pyridoxal-phosphate-dependent aminotransferase family. Histidinol-phosphate aminotransferase subfamily. Pyridoxal 5'-phosphate serves as cofactor.

The enzyme catalyses L-histidinol phosphate + 2-oxoglutarate = 3-(imidazol-4-yl)-2-oxopropyl phosphate + L-glutamate. Its pathway is amino-acid biosynthesis; L-histidine biosynthesis; L-histidine from 5-phospho-alpha-D-ribose 1-diphosphate: step 7/9. The chain is Histidinol-phosphate aminotransferase from Pyrococcus furiosus (strain ATCC 43587 / DSM 3638 / JCM 8422 / Vc1).